The following is a 355-amino-acid chain: Mu-like prophage FluMu protein gp47 (355 aa).

Belongs to the Mu gp47/PBSX XkdT family.

The protein is Mu-like prophage FluMu protein gp47 of Haemophilus influenzae (strain ATCC 51907 / DSM 11121 / KW20 / Rd).